We begin with the raw amino-acid sequence, 325 residues long: Beta-ketoacyl-[acyl-carrier-protein] synthase III (325 aa).

Catalysis depends on residues Cys-116 and His-252. Residues Gln-253–Arg-257 are ACP-binding. The active site involves Asn-282.

This sequence belongs to the thiolase-like superfamily. FabH family. As to quaternary structure, homodimer.

Its subcellular location is the cytoplasm. The enzyme catalyses malonyl-[ACP] + acetyl-CoA + H(+) = 3-oxobutanoyl-[ACP] + CO2 + CoA. It participates in lipid metabolism; fatty acid biosynthesis. Functionally, catalyzes the condensation reaction of fatty acid synthesis by the addition to an acyl acceptor of two carbons from malonyl-ACP. Catalyzes the first condensation reaction which initiates fatty acid synthesis and may therefore play a role in governing the total rate of fatty acid production. Possesses both acetoacetyl-ACP synthase and acetyl transacylase activities. Its substrate specificity determines the biosynthesis of branched-chain and/or straight-chain of fatty acids. The chain is Beta-ketoacyl-[acyl-carrier-protein] synthase III from Xanthomonas axonopodis pv. citri (strain 306).